The following is a 206-amino-acid chain: MLKSLLCILLIFGCLCRIHGVMFHLTPNTQKCLKEDIQANQLVMGEYEVSDVPGQIIDYIARDTKGHILSQKEHITKGKFSFTSEVFDAYEICFISKVPPHQRGISQEVSLVTKKGVETKNYEGIGEASKLKPLEVDLKRLEDLSDSIVRDFAVMRKREEEMRDTNEKTNSRVLFFSIFSMCCLLGLATWQVLYLRRYFKAKKLIE.

The first 20 residues, 1-20 (MLKSLLCILLIFGCLCRIHG), serve as a signal peptide directing secretion. Residues 21-172 (VMFHLTPNTQ…RDTNEKTNSR (152 aa)) lie on the Lumenal side of the membrane. Positions 30-140 (QKCLKEDIQA…LKPLEVDLKR (111 aa)) constitute a GOLD domain. The helical transmembrane segment at 173–193 (VLFFSIFSMCCLLGLATWQVL) threads the bilayer. The Cytoplasmic segment spans residues 194–206 (YLRRYFKAKKLIE).

It belongs to the EMP24/GP25L family.

It localises to the membrane. In terms of biological role, eca and bai are essential, though not redundant, for dorsoventral patterning of the embryo. Specifically required during early embryogenesis for the activity of maternal tkv, while the zygotic tkv is not affected. This chain is Transmembrane emp24 domain-containing protein bai, found in Drosophila grimshawi (Hawaiian fruit fly).